A 244-amino-acid polypeptide reads, in one-letter code: Futalosine hydrolase (244 aa).

Belongs to the PNP/UDP phosphorylase family. Futalosine hydrolase subfamily.

The catalysed reaction is futalosine + H2O = dehypoxanthine futalosine + hypoxanthine. Its pathway is quinol/quinone metabolism; menaquinone biosynthesis. In terms of biological role, catalyzes the hydrolysis of futalosine (FL) to dehypoxanthine futalosine (DHFL) and hypoxanthine, a step in the biosynthesis of menaquinone (MK, vitamin K2). Cannot directly use aminodeoxyfutalosine (AFL) as a substrate. The sequence is that of Futalosine hydrolase from Acidothermus cellulolyticus (strain ATCC 43068 / DSM 8971 / 11B).